Reading from the N-terminus, the 206-residue chain is mRNA-decapping protein D9 (206 aa).

Residues 23 to 206 (KKTHVFAICV…FIYNTLLYSK (184 aa)) form the Nudix hydrolase domain. Positions 104-125 (GKLNKSETIDDCIRREIKEETD) match the Nudix box motif. Residue Glu-110 participates in Mg(2+) binding. Glu-119 acts as the Nucleophile in catalysis. Mg(2+)-binding residues include Glu-123 and Asp-144.

It belongs to the Nudix hydrolase family. It depends on Mg(2+) as a cofactor. The cofactor is Mn(2+).

Decapping enzyme required for the removal of the 5'-end m7GpppN cap tethered to viral and host mRNAs to allow their decay in cells. May therefore accelerate viral and cellular mRNA turnover to eliminate competing host mRNAs and allow stage-specific synthesis of viral proteins. Acceleration of the turnover of cellular transcripts may even promote the shutoff of host protein synthesis. Does not cleave unmethylated RNAs or RNAs shorter than 24 nucleotides. The polypeptide is mRNA-decapping protein D9 (Oryctolagus cuniculus (Rabbit)).